A 931-amino-acid chain; its full sequence is Bifunctional uridylyltransferase/uridylyl-removing enzyme (931 aa).

Residues 1 to 383 (MDSVATDSKA…TTGSTWRRVP (383 aa)) are uridylyltransferase. A uridylyl-removing region spans residues 384-739 (ESDDFIVDNN…VGFDPARGVT (356 aa)). One can recognise an HD domain in the interval 499–622 (VDEHLIRCIG…VQSVEQMKLL (124 aa)). 2 consecutive ACT domains span residues 740–822 (ELTI…AVAR) and 851–931 (VIEV…QPAA).

The protein belongs to the GlnD family. Mg(2+) serves as cofactor.

The enzyme catalyses [protein-PII]-L-tyrosine + UTP = [protein-PII]-uridylyl-L-tyrosine + diphosphate. The catalysed reaction is [protein-PII]-uridylyl-L-tyrosine + H2O = [protein-PII]-L-tyrosine + UMP + H(+). Its activity is regulated as follows. Uridylyltransferase (UTase) activity is inhibited by glutamine, while glutamine activates uridylyl-removing (UR) activity. Modifies, by uridylylation and deuridylylation, the PII regulatory proteins (GlnB and homologs), in response to the nitrogen status of the cell that GlnD senses through the glutamine level. Under low glutamine levels, catalyzes the conversion of the PII proteins and UTP to PII-UMP and PPi, while under higher glutamine levels, GlnD hydrolyzes PII-UMP to PII and UMP (deuridylylation). Thus, controls uridylylation state and activity of the PII proteins, and plays an important role in the regulation of nitrogen fixation and metabolism. The polypeptide is Bifunctional uridylyltransferase/uridylyl-removing enzyme (Bradyrhizobium sp. (strain ORS 278)).